The following is a 329-amino-acid chain: Oxidoreductase sirO (329 aa).

NADP(+) is bound at residue Asp-54. Residue Tyr-59 is the Proton donor of the active site. His-118 contributes to the substrate binding site. Residues 148–149 (SN), Gln-174, 203–213 (SPLCCGLLINA), and 288–296 (SSARQLEES) contribute to the NADP(+) site.

It belongs to the aldo/keto reductase family. Aldo/keto reductase 2 subfamily.

Its pathway is mycotoxin biosynthesis. Functionally, oxidoreductase; part of the gene cluster that mediates the biosynthesis of sirodesmin PL, an epipolythiodioxopiperazine (ETP) characterized by a disulfide bridged cyclic dipeptide and that acts as a phytotoxin which is involved in the blackleg didease of canola. SirD catalyzes the O-prenylation of L-tyrosine (L-Tyr) in the presence of dimethylallyl diphosphate (DMAPP) to yield 4-O-dimethylallyl-L-Tyr, and therefore represents probably the first pathway-specific enzyme in the biosynthesis of sirodesmin PL. 4-O-dimethylallyl-L-Tyr, then undergoes condensation with L-Ser in a reaction catalyzed by the non-ribosomal peptide synthase sirP to form the diketopiperazine (DKP) backbone. Further bishydroxylation of the DKP performed by the cytochrome P450 monooxygenase sirC leads to the production of the intermediate phomamide. This step is essential to form the reactive thiol group required for toxicity of sirodesmin PL. The next steps of sirodesmin biosynthesis are not well understood yet, but some predictions could be made from intermediate compounds identification. Phomamide is converted into phomalizarine via oxidation, probably by sirT. Further oxidation, methylation (by sirM or sirN) and reduction steps convert phomalizarine to deacetyl sirodesmin. Finally, acetyltransferase sirH probably acetylates deacetyl sirodesmin to produce sirodesmin PL. This chain is Oxidoreductase sirO, found in Leptosphaeria maculans (Blackleg fungus).